The primary structure comprises 215 residues: UPF0319 protein VVA1446 (215 aa).

The first 21 residues, 1 to 21 (MNIIKPLTCILAMSISGLATA), serve as a signal peptide directing secretion.

Belongs to the UPF0319 family.

This Vibrio vulnificus (strain YJ016) protein is UPF0319 protein VVA1446.